A 364-amino-acid polypeptide reads, in one-letter code: MWNATPSEEPEPNVTLDLDWDASPGNDSLPDELLPLFPAPLLAGVTATCVALFVVGISGNLLTMLVVSRFRELRTTTNLYLSSMAFSDLLIFLCMPLDLVRLWQYRPWNFGDLLCKLFQFVSESCTYATVLTITALSVERYFAICFPLRAKVVVTKGRVKLVILVIWAVAFCSAGPIFVLVGVEHENGTDPRDTNECRATEFAVRSGLLTVMVWVSSVFFFLPVFCLTVLYSLIGRKLWRRRGDAAVGASLRDQNHKQTVKMLAVVVFAFILCWLPFHVGRYLFSKSFEPGSLEIAQISQYCNLVSFVLFYLSAAINPILYNIMSKKYRVAVFKLLGFESFSQRKLSTLKDESSRAWTKSSINT.

At 1–40 (MWNATPSEEPEPNVTLDLDWDASPGNDSLPDELLPLFPAP) the chain is on the extracellular side. Asparagine 13 and asparagine 26 each carry an N-linked (GlcNAc...) asparagine glycan. A helical membrane pass occupies residues 41–66 (LLAGVTATCVALFVVGISGNLLTMLV). Topologically, residues 67–72 (VSRFRE) are cytoplasmic. A helical membrane pass occupies residues 73–96 (LRTTTNLYLSSMAFSDLLIFLCMP). Topologically, residues 97–117 (LDLVRLWQYRPWNFGDLLCKL) are extracellular. The cysteines at positions 115 and 197 are disulfide-linked. Residues 118 to 139 (FQFVSESCTYATVLTITALSVE) traverse the membrane as a helical segment. The Cytoplasmic segment spans residues 140–162 (RYFAICFPLRAKVVVTKGRVKLV). The helical transmembrane segment at 163-183 (ILVIWAVAFCSAGPIFVLVGV) threads the bilayer. Topologically, residues 184–211 (EHENGTDPRDTNECRATEFAVRSGLLTV) are extracellular. N-linked (GlcNAc...) asparagine glycosylation is present at asparagine 187. A helical transmembrane segment spans residues 212–235 (MVWVSSVFFFLPVFCLTVLYSLIG). Residues 236 to 263 (RKLWRRRGDAAVGASLRDQNHKQTVKML) lie on the Cytoplasmic side of the membrane. The helical transmembrane segment at 264-285 (AVVVFAFILCWLPFHVGRYLFS) threads the bilayer. Residues 286 to 302 (KSFEPGSLEIAQISQYC) are Extracellular-facing. The chain crosses the membrane as a helical span at residues 303–326 (NLVSFVLFYLSAAINPILYNIMSK). Topologically, residues 327–364 (KYRVAVFKLLGFESFSQRKLSTLKDESSRAWTKSSINT) are cytoplasmic.

Belongs to the G-protein coupled receptor 1 family.

It localises to the cell membrane. Its function is as follows. Receptor for ghrelin, coupled to G-alpha-11 proteins. Stimulates growth hormone secretion. Also binds other growth hormone releasing peptides (GHRP) (e.g. Met-enkephalin and GHRP-6) as well as non-peptide, low molecular weight secretagogues (e.g. L-692,429, MK-0677, adenosine). In Rattus norvegicus (Rat), this protein is Growth hormone secretagogue receptor type 1 (Ghsr).